The chain runs to 385 residues: Acyl-CoA dehydrogenase IpdE1 (385 aa).

FAD-binding positions include 126 to 129 (QGYS) and Ser161. Glu244 functions as the Proton acceptor in the catalytic mechanism. 364–366 (SNE) lines the FAD pocket.

Belongs to the acyl-CoA dehydrogenase family. In terms of assembly, heterotetramer composed of 2 IpdE1 subunits and 2 IpdE2 subunits. FAD serves as cofactor.

It carries out the reaction 3-[(3aS,4S,5R,7aS)-5-hydroxy-7a-methyl-1-oxo-octahydro-1H-inden-4-yl]propanoyl-CoA + A = (2E)-3-[(3aS,4S,5R,7aS)-5-hydroxy-7a-methyl-1-oxo-octahydro-1H-inden-4-yl]prop-2-enoyl-CoA + AH2. It functions in the pathway steroid metabolism; cholesterol degradation. Functionally, involved in cholesterol degradation. Catalyzes the dehydrogenation of 5OH-HIP-CoA to 5OH-HIPE-CoA. Can also use octanoyl-CoA and dihydroferuloyl-CoA, with lower efficiency. Cannot use 3-oxo-4-pregnene-20-carboxyl-CoA (3-OPC-CoA). This is Acyl-CoA dehydrogenase IpdE1 from Mycobacterium tuberculosis (strain ATCC 25618 / H37Rv).